The primary structure comprises 193 residues: dTTP/UTP pyrophosphatase (193 aa).

Residue aspartate 75 is the Proton acceptor of the active site.

Belongs to the Maf family. YhdE subfamily. A divalent metal cation is required as a cofactor.

It is found in the cytoplasm. The catalysed reaction is dTTP + H2O = dTMP + diphosphate + H(+). It carries out the reaction UTP + H2O = UMP + diphosphate + H(+). Nucleoside triphosphate pyrophosphatase that hydrolyzes dTTP and UTP. May have a dual role in cell division arrest and in preventing the incorporation of modified nucleotides into cellular nucleic acids. The chain is dTTP/UTP pyrophosphatase from Koribacter versatilis (strain Ellin345).